The following is a 155-amino-acid chain: Large ribosomal subunit protein eL24 (155 aa).

The tract at residues L87–R155 is disordered. Over residues L89–K129 the composition is skewed to basic and acidic residues. Positions A130–A143 are enriched in low complexity.

This sequence belongs to the eukaryotic ribosomal protein eL24 family. In terms of assembly, component of the large ribosomal subunit. Mature ribosomes consist of a small (40S) and a large (60S) subunit. The 40S subunit contains about 32 different proteins and 1 molecule of RNA (18S). The 60S subunit contains 45 different proteins and 3 molecules of RNA (25S, 5.8S and 5S).

It is found in the cytoplasm. Functionally, component of the ribosome, a large ribonucleoprotein complex responsible for the synthesis of proteins in the cell. The small ribosomal subunit (SSU) binds messenger RNAs (mRNAs) and translates the encoded message by selecting cognate aminoacyl-transfer RNA (tRNA) molecules. The large subunit (LSU) contains the ribosomal catalytic site termed the peptidyl transferase center (PTC), which catalyzes the formation of peptide bonds, thereby polymerizing the amino acids delivered by tRNAs into a polypeptide chain. The nascent polypeptides leave the ribosome through a tunnel in the LSU and interact with protein factors that function in enzymatic processing, targeting, and the membrane insertion of nascent chains at the exit of the ribosomal tunnel. The polypeptide is Large ribosomal subunit protein eL24 (Candida albicans (strain SC5314 / ATCC MYA-2876) (Yeast)).